The following is a 383-amino-acid chain: Chaperone protein DnaJ (383 aa).

The region spanning 5 to 69 (DYYDILGVSK…QKRAQYDQFG (65 aa)) is the J domain. Residues 138–222 (GKTTTIKYDR…CHGAGHVHER (85 aa)) form a CR-type zinc finger. Residues Cys151, Cys154, Cys168, Cys171, Cys194, Cys197, Cys210, and Cys213 each contribute to the Zn(2+) site. 4 CXXCXGXG motif repeats span residues 151-158 (CKTCHGTG), 168-175 (CPRCHGAG), 194-201 (CPECNGTG), and 210-217 (CDTCHGAG).

It belongs to the DnaJ family. As to quaternary structure, homodimer. It depends on Zn(2+) as a cofactor.

Its subcellular location is the cytoplasm. Its function is as follows. Participates actively in the response to hyperosmotic and heat shock by preventing the aggregation of stress-denatured proteins and by disaggregating proteins, also in an autonomous, DnaK-independent fashion. Unfolded proteins bind initially to DnaJ; upon interaction with the DnaJ-bound protein, DnaK hydrolyzes its bound ATP, resulting in the formation of a stable complex. GrpE releases ADP from DnaK; ATP binding to DnaK triggers the release of the substrate protein, thus completing the reaction cycle. Several rounds of ATP-dependent interactions between DnaJ, DnaK and GrpE are required for fully efficient folding. Also involved, together with DnaK and GrpE, in the DNA replication of plasmids through activation of initiation proteins. The protein is Chaperone protein DnaJ of Limosilactobacillus reuteri (strain DSM 20016) (Lactobacillus reuteri).